We begin with the raw amino-acid sequence, 92 residues long: Cell division topological specificity factor (92 aa).

This sequence belongs to the MinE family.

Prevents the cell division inhibition by proteins MinC and MinD at internal division sites while permitting inhibition at polar sites. This ensures cell division at the proper site by restricting the formation of a division septum at the midpoint of the long axis of the cell. The protein is Cell division topological specificity factor of Gluconobacter oxydans (strain 621H) (Gluconobacter suboxydans).